We begin with the raw amino-acid sequence, 159 residues long: Cell division protein SepF (159 aa).

The interval 23–69 (DYIEEDEEQKPASKSAFDSDHTVTPLASTTAPAASSTTKPFPGGRVN) is disordered. The span at 44 to 64 (TVTPLASTTAPAASSTTKPFP) shows a compositional bias: low complexity.

It belongs to the SepF family. Homodimer. Interacts with FtsZ.

It is found in the cytoplasm. Cell division protein that is part of the divisome complex and is recruited early to the Z-ring. Probably stimulates Z-ring formation, perhaps through the cross-linking of FtsZ protofilaments. Its function overlaps with FtsA. The protein is Cell division protein SepF of Bifidobacterium longum (strain DJO10A).